The chain runs to 503 residues: Glucosaminyl-phosphatidylinositol-acyltransferase PIGW (503 aa).

Residues 1 to 21 (MSQKQMKEAFVSNQNGTSVLE) are Lumenal-facing. N15 carries an N-linked (GlcNAc...) asparagine glycan. The chain crosses the membrane as a helical span at residues 22–42 (ITEGLCLPALCILCRGLLIIL). Topologically, residues 43 to 56 (SQQLCSSLHNSRTR) are cytoplasmic. The helical transmembrane segment at 57 to 75 (FLVDFAFLIVPLVTTLTIF) threads the bilayer. Residues 76-78 (SSF) lie on the Lumenal side of the membrane. The helical transmembrane segment at 79–98 (VLLEYLVAIILGAGLLYEIY) threads the bilayer. Residues 99–131 (CRRTCYARMPFQKICEKFLKVSLESEHIPAISC) are Cytoplasmic-facing. The chain crosses the membrane as a helical span at residues 132–152 (FRVVNSAFTAVAILAVDFPLF). The Lumenal segment spans residues 153-160 (PRRYAKTE). Residues 161–181 (LYGTGAMDYGVGGFIFGSAMV) form a helical membrane-spanning segment. Residues 182 to 201 (SPEVRRKYTKGSRFCYLTKS) lie on the Cytoplasmic side of the membrane. The helical transmembrane segment at 202 to 222 (LYSLWPLVFLGVGRLVAIKSV) threads the bilayer. Residues 223–236 (DYQEHLTEYGVHWN) are Lumenal-facing. Residues 237 to 257 (FFFTLIAVKLITSLLLLICPL) form a helical membrane-spanning segment. Topologically, residues 258-259 (NR) are cytoplasmic. Residues 260 to 280 (SWVVAISIAALYQLALDFTPL) form a helical membrane-spanning segment. The Lumenal segment spans residues 281–304 (KSLILYGTDGSGTRVGLLNANREG). Residues 305-325 (IISVLGYVAVHMAGVQTGLYV) form a helical membrane-spanning segment. Residues 326 to 337 (LKKRSHIKDWIK) lie on the Cytoplasmic side of the membrane. Residues 338-358 (VACCILLTAIGLFISLYIVQV) traverse the membrane as a helical segment. Over 359–369 (NVEVASRRMAN) the chain is Lumenal. The chain crosses the membrane as a helical span at residues 370 to 390 (LAFCIWIVASCLILLSSLLLG). Residues 391 to 447 (DIILSFAKFVIKEAAVPCSWKLIQSPTANKKHLESIVFDAKRKEPTLCLITAMNRNQ) lie on the Cytoplasmic side of the membrane. The residue at position 415 (S415) is a Phosphoserine. Residues 448-468 (LLFFLLSNVTTGLVNLSIDTL) form a helical membrane-spanning segment. Residues 469–472 (HSST) lie on the Lumenal side of the membrane. The helical transmembrane segment at 473–493 (PWALCLLNLYMFTNCLIIYVL) threads the bilayer. Residues 494–503 (HLQDKTIKFW) are Cytoplasmic-facing.

The protein belongs to the PIGW family.

It localises to the endoplasmic reticulum membrane. The protein operates within glycolipid biosynthesis; glycosylphosphatidylinositol-anchor biosynthesis. Its function is as follows. Acyltransferase that catalyzes the acyl transfer from an acyl-CoA at the 2-OH position of the inositol ring of glucosaminyl phosphatidylinositol (GlcN-PI) to generate glucosaminyl acyl phosphatidylinositol (GlcN-(acyl)PI) and participates in the fourth step of GPI-anchor biosynthesis. Required for the transport of GPI-anchored proteins to the plasma membrane. Acetylation during GPI-anchor biosynthesis is not essential for the subsequent mannosylation and is usually removed soon after the attachment of GPIs to proteins. The protein is Glucosaminyl-phosphatidylinositol-acyltransferase PIGW of Bos taurus (Bovine).